Reading from the N-terminus, the 834-residue chain is Periplasmic nitrate reductase (834 aa).

Positions 1–29 (MSLTRRQFAKANAAAIAATVAGMPIASTA) form a signal peptide, tat-type signal. Positions 41-97 (LKWDKAPCRFCGTGCGVMVATRENRVVATHGDVKADVNRGINCVKGYFLSKIMYGTD) constitute a 4Fe-4S Mo/W bis-MGD-type domain. C48, C51, C55, and C83 together coordinate [4Fe-4S] cluster. Mo-bis(molybdopterin guanine dinucleotide) contacts are provided by residues K85, Q152, N177, C181, 214-221 (WGSNMAEM), 245-249 (STFEH), 264-266 (QTD), M375, Q379, N485, 511-512 (SD), K534, D561, and 721-730 (TGRVLEHWHT). Substrate is bound at residue F797. Residues N805 and K822 each contribute to the Mo-bis(molybdopterin guanine dinucleotide) site.

Belongs to the prokaryotic molybdopterin-containing oxidoreductase family. NasA/NapA/NarB subfamily. As to quaternary structure, component of the periplasmic nitrate reductase NapAB complex composed of NapA and NapB. Requires [4Fe-4S] cluster as cofactor. The cofactor is Mo-bis(molybdopterin guanine dinucleotide). In terms of processing, predicted to be exported by the Tat system. The position of the signal peptide cleavage has not been experimentally proven.

It is found in the periplasm. The catalysed reaction is 2 Fe(II)-[cytochrome] + nitrate + 2 H(+) = 2 Fe(III)-[cytochrome] + nitrite + H2O. Catalytic subunit of the periplasmic nitrate reductase complex NapAB. Receives electrons from NapB and catalyzes the reduction of nitrate to nitrite. The sequence is that of Periplasmic nitrate reductase from Stutzerimonas stutzeri (Pseudomonas stutzeri).